A 539-amino-acid polypeptide reads, in one-letter code: Phospho-2-dehydro-3-deoxyheptonate aldolase 2, chloroplastic (539 aa).

2 disordered regions span residues 1–23 (MALA…SAPQ) and 41–70 (VHAA…APEK). The transit peptide at 1–54 (MALATNSAAVSGGAAAAASSAPQPRLAATFLPMRRRTVSAVHAADPAKSNGPVQ) directs the protein to the chloroplast. Residues 7-21 (SAAVSGGAAAAASSA) are compositionally biased toward low complexity.

Belongs to the class-II DAHP synthase family.

It is found in the plastid. The protein resides in the chloroplast. It carries out the reaction D-erythrose 4-phosphate + phosphoenolpyruvate + H2O = 7-phospho-2-dehydro-3-deoxy-D-arabino-heptonate + phosphate. It participates in metabolic intermediate biosynthesis; chorismate biosynthesis; chorismate from D-erythrose 4-phosphate and phosphoenolpyruvate: step 1/7. This Oryza sativa subsp. japonica (Rice) protein is Phospho-2-dehydro-3-deoxyheptonate aldolase 2, chloroplastic (DAHPS2).